We begin with the raw amino-acid sequence, 480 residues long: UDP-N-acetylmuramoylalanine--D-glutamate ligase (480 aa).

Residue 110 to 116 participates in ATP binding; that stretch reads GTNGKST.

This sequence belongs to the MurCDEF family.

The protein resides in the cytoplasm. The enzyme catalyses UDP-N-acetyl-alpha-D-muramoyl-L-alanine + D-glutamate + ATP = UDP-N-acetyl-alpha-D-muramoyl-L-alanyl-D-glutamate + ADP + phosphate + H(+). Its pathway is cell wall biogenesis; peptidoglycan biosynthesis. Its function is as follows. Cell wall formation. Catalyzes the addition of glutamate to the nucleotide precursor UDP-N-acetylmuramoyl-L-alanine (UMA). This Synechococcus sp. (strain JA-2-3B'a(2-13)) (Cyanobacteria bacterium Yellowstone B-Prime) protein is UDP-N-acetylmuramoylalanine--D-glutamate ligase.